A 220-amino-acid chain; its full sequence is LOB domain-containing protein 31 (220 aa).

Positions 10–112 (GPCGACKFLR…AELAYVQTQL (103 aa)) constitute an LOB domain. Residues 117-172 (GLPPPNSQNNSRTEAASSSNVPLISSVDSKDNMSSSSSHIPCMSQQQEQEQPKEAI) are disordered. Polar residues predominate over residues 123 to 139 (SQNNSRTEAASSSNVPL).

Belongs to the LOB domain-containing protein family. As to expression, expressed in roots, stems and flowers.

This is LOB domain-containing protein 31 (LBD31) from Arabidopsis thaliana (Mouse-ear cress).